Consider the following 455-residue polypeptide: Na(+)/H(+) antiporter NhaA (455 aa).

Helical transmembrane passes span 31–51, 83–103, 113–133, 141–161, 170–190, 198–218, 231–251, 309–329, 345–365, 383–403, and 414–434; these read ASGI…NSPW, GLMS…VLIG, FPLI…LLCV, GWGI…ILLG, VFVT…IALF, VSLL…LLGI, IWAA…LLAF, GLQP…NAGV, IGVA…FAWL, IFGA…IASL, and SKIG…VVLW.

The protein belongs to the NhaA Na(+)/H(+) (TC 2.A.33) antiporter family.

It localises to the cell inner membrane. It carries out the reaction Na(+)(in) + 2 H(+)(out) = Na(+)(out) + 2 H(+)(in). Its function is as follows. Na(+)/H(+) antiporter that extrudes sodium in exchange for external protons. This Koribacter versatilis (strain Ellin345) protein is Na(+)/H(+) antiporter NhaA.